A 78-amino-acid polypeptide reads, in one-letter code: Putative snRNP Sm-like protein (78 aa).

The Sm domain maps to 4 to 76 (RPLDVIHRSL…VLAISPVDVG (73 aa)).

Belongs to the snRNP Sm proteins family.

The sequence is that of Putative snRNP Sm-like protein from Thermococcus onnurineus (strain NA1).